Reading from the N-terminus, the 563-residue chain is Germacrene-A synthase (563 aa).

Asp-316, Asp-320, Asp-461, and Glu-469 together coordinate Mg(2+). The DDXXD motif motif lies at 316–320 (DDIYD).

It belongs to the terpene synthase family. Tpsa subfamily. Requires Mg(2+) as cofactor. Expressed in young leaves. Detected in trichomes and cones.

It carries out the reaction (2E,6E)-farnesyl diphosphate = (+)-(R)-germacrene A + diphosphate. It participates in secondary metabolite biosynthesis; terpenoid biosynthesis. Its function is as follows. Sesquiterpene synthase that catalyzes the formation of germacrene A. Can use farnesyl diphosphate as substrate, but not geranyl diphosphate or geranylgeranyl diphosphate. Beta-elemene, the initially measured product in the assay, is derived nonenzymatically from germacrene A. This chain is Germacrene-A synthase, found in Humulus lupulus (European hop).